The following is an 87-amino-acid chain: Small ribosomal subunit protein uS17 (87 aa).

Belongs to the universal ribosomal protein uS17 family. Part of the 30S ribosomal subunit.

In terms of biological role, one of the primary rRNA binding proteins, it binds specifically to the 5'-end of 16S ribosomal RNA. The protein is Small ribosomal subunit protein uS17 of Thioalkalivibrio sulfidiphilus (strain HL-EbGR7).